Here is a 122-residue protein sequence, read N- to C-terminus: Putative TLX1 neighbor protein (122 aa).

The interval 21-122 (SLLSQEAMGP…LGGGRGQRGQ (102 aa)) is disordered. The segment covering 113–122 (LGGGRGQRGQ) has biased composition (gly residues).

This is Putative TLX1 neighbor protein (TLX1NB) from Homo sapiens (Human).